The sequence spans 198 residues: Recombination protein RecR (198 aa).

The C4-type zinc finger occupies 58 to 73 (CSVCNNLTEKDPCDFC). The Toprim domain maps to 81 to 175 (NLICVVESPK…KVTRIAHGLP (95 aa)).

Belongs to the RecR family.

Functionally, may play a role in DNA repair. It seems to be involved in an RecBC-independent recombinational process of DNA repair. It may act with RecF and RecO. This Halothermothrix orenii (strain H 168 / OCM 544 / DSM 9562) protein is Recombination protein RecR.